The chain runs to 656 residues: Translation factor GUF1 homolog, mitochondrial (656 aa).

The tr-type G domain occupies 55–236 (QRIRNFSIIA…EIVRRLPPPD (182 aa)). GTP is bound by residues 64–71 (AHVDHGKS), 129–133 (DTPGH), and 183–186 (NKID).

Belongs to the TRAFAC class translation factor GTPase superfamily. Classic translation factor GTPase family. LepA subfamily.

It is found in the mitochondrion inner membrane. It catalyses the reaction GTP + H2O = GDP + phosphate + H(+). In terms of biological role, promotes mitochondrial protein synthesis. May act as a fidelity factor of the translation reaction, by catalyzing a one-codon backward translocation of tRNAs on improperly translocated ribosomes. Binds to mitochondrial ribosomes in a GTP-dependent manner. The sequence is that of Translation factor GUF1 homolog, mitochondrial from Aedes aegypti (Yellowfever mosquito).